A 163-amino-acid chain; its full sequence is Nucleotide-binding protein tll0793 (163 aa).

It belongs to the YajQ family.

Its function is as follows. Nucleotide-binding protein. The polypeptide is Nucleotide-binding protein tll0793 (Thermosynechococcus vestitus (strain NIES-2133 / IAM M-273 / BP-1)).